We begin with the raw amino-acid sequence, 95 residues long: Small ribosomal subunit protein bS6 (95 aa).

This sequence belongs to the bacterial ribosomal protein bS6 family.

Functionally, binds together with bS18 to 16S ribosomal RNA. The protein is Small ribosomal subunit protein bS6 of Oceanobacillus iheyensis (strain DSM 14371 / CIP 107618 / JCM 11309 / KCTC 3954 / HTE831).